The sequence spans 132 residues: L-ectoine synthase (132 aa).

The protein belongs to the ectoine synthase family.

The catalysed reaction is (2S)-4-acetamido-2-aminobutanoate = L-ectoine + H2O. It participates in amine and polyamine biosynthesis; ectoine biosynthesis; L-ectoine from L-aspartate 4-semialdehyde: step 3/3. Functionally, catalyzes the circularization of gamma-N-acetyl-alpha,gamma-diaminobutyric acid (ADABA) to ectoine (1,4,5,6-tetrahydro-2-methyl-4-pyrimidine carboxylic acid), which is an excellent osmoprotectant. The protein is L-ectoine synthase (ectC) of Streptomyces anulatus (Streptomyces chrysomallus).